Here is a 245-residue protein sequence, read N- to C-terminus: Derlin-1 (245 aa).

The Cytoplasmic segment spans residues 1–5 (MDLEN). The chain crosses the membrane as a helical span at residues 6-26 (FLLGIPIVTRYWFLASTIIPL). Over 27 to 57 (LGRFGFINVQWMFLQWDLVVNKFQFWRPLTA) the chain is Lumenal. Residues 58–78 (LIYYPVTPQTGFHWLMMCYFL) form a helical membrane-spanning segment. Over 79-100 (YNYSKALESETYRGRSADYLFM) the chain is Cytoplasmic. Residues 101–121 (LIFNWFFCSGLCMALDIYFLL) traverse the membrane as a helical segment. Over 122-166 (EPMVISVLYVWCQVNKDTIVSFWFGMRFPARYLPWVLWGFNAVLR) the chain is Lumenal. The chain crosses the membrane as a helical span at residues 167 to 187 (GGGTNELVGILVGHAYFFVAL). Over 188-245 (KYPDEYGVDLISTPEFLHRLIPDEDGGIHGQDGNIRGARQQPRGHQWPGGVGARLGGN) the chain is Cytoplasmic. The segment at 218-245 (QDGNIRGARQQPRGHQWPGGVGARLGGN) is disordered. Residues 234–245 (WPGGVGARLGGN) show a composition bias toward gly residues.

It belongs to the derlin family.

The protein resides in the endoplasmic reticulum membrane. Its function is as follows. Specifically required for the degradation process of misfolded endoplasmic reticulum (ER) luminal proteins. Participates in the transfer of misfolded proteins from the ER to the cytosol, where they are destroyed by the proteasome in a ubiquitin-dependent manner. This chain is Derlin-1, found in Caenorhabditis elegans.